A 114-amino-acid polypeptide reads, in one-letter code: Neurotrophic factor BDNF precursor form (114 aa).

Intrachain disulfides connect cysteine 14-cysteine 81, cysteine 59-cysteine 110, and cysteine 69-cysteine 112.

This sequence belongs to the NGF-beta family.

Its subcellular location is the secreted. Promotes the survival of neuronal populations that are all located either in the central nervous system or directly connected to it. The protein is Neurotrophic factor BDNF precursor form (bdnf) of Xenopus laevis (African clawed frog).